We begin with the raw amino-acid sequence, 503 residues long: Cytochrome P450 3A13 (503 aa).

Residue Cys442 participates in heme binding.

This sequence belongs to the cytochrome P450 family. Heme is required as a cofactor.

Its subcellular location is the endoplasmic reticulum membrane. It is found in the microsome membrane. The catalysed reaction is an organic molecule + reduced [NADPH--hemoprotein reductase] + O2 = an alcohol + oxidized [NADPH--hemoprotein reductase] + H2O + H(+). Can activate aflatoxin B1 to a genotoxic product. The polypeptide is Cytochrome P450 3A13 (Cyp3a13) (Mus musculus (Mouse)).